A 359-amino-acid chain; its full sequence is DNA polymerase IV (359 aa).

Residues 4–184 enclose the UmuC domain; the sequence is IVHVDMDAFY…LKVNRIPGVG (181 aa). Residues aspartate 8 and aspartate 102 each coordinate Mg(2+). Residue glutamate 103 is part of the active site.

Belongs to the DNA polymerase type-Y family. As to quaternary structure, monomer. It depends on Mg(2+) as a cofactor.

Its subcellular location is the cytoplasm. It carries out the reaction DNA(n) + a 2'-deoxyribonucleoside 5'-triphosphate = DNA(n+1) + diphosphate. Its function is as follows. Poorly processive, error-prone DNA polymerase involved in untargeted mutagenesis. Copies undamaged DNA at stalled replication forks, which arise in vivo from mismatched or misaligned primer ends. These misaligned primers can be extended by PolIV. Exhibits no 3'-5' exonuclease (proofreading) activity. May be involved in translesional synthesis, in conjunction with the beta clamp from PolIII. This chain is DNA polymerase IV, found in Xanthomonas euvesicatoria pv. vesicatoria (strain 85-10) (Xanthomonas campestris pv. vesicatoria).